We begin with the raw amino-acid sequence, 296 residues long: Methylsterol monooxygenase 1 (296 aa).

A run of 2 helical transmembrane segments spans residues 55 to 75 (LLVH…FQFI) and 100 to 120 (TLIF…YYFT). In terms of domain architecture, Fatty acid hydroxylase spans 145–274 (CAVIEDAWHY…FTWWDRIFGT (130 aa)). The Histidine box-1 motif lies at 157 to 161 (HRLLH). A Histidine box-2 motif is present at residues 170-174 (HKVHH). Residues 199–219 (FFIGIVVFCNHVVLLWAWVIC) form a helical membrane-spanning segment. The short motif at 249–255 (FHDFHHM) is the Histidine box-3 element.

Belongs to the sterol desaturase family. It depends on Fe cation as a cofactor.

The protein localises to the endoplasmic reticulum membrane. It carries out the reaction 4,4-dimethyl-5alpha-cholest-7-en-3beta-ol + 6 Fe(II)-[cytochrome b5] + 3 O2 + 5 H(+) = 4alpha-carboxy-4beta-methyl-5alpha-cholest-7-ene-3beta-ol + 6 Fe(III)-[cytochrome b5] + 4 H2O. Its pathway is steroid biosynthesis; zymosterol biosynthesis; zymosterol from lanosterol: step 3/6. Functionally, catalyzes the first step in the removal of the two C-4 methyl groups of 4,4-dimethylzymosterol. The protein is Methylsterol monooxygenase 1 (MSMO1) of Gallus gallus (Chicken).